Consider the following 170-residue polypeptide: Mediator of RNA polymerase II transcription subunit 10 (170 aa).

It belongs to the Mediator complex subunit 10 family. In terms of assembly, component of the Mediator complex.

The protein localises to the nucleus. Functionally, component of the Mediator complex, a coactivator involved in the regulated transcription of nearly all RNA polymerase II-dependent genes. Mediator functions as a bridge to convey information from gene-specific regulatory proteins to the basal RNA polymerase II transcription machinery. Mediator is recruited to promoters by direct interactions with regulatory proteins and serves as a scaffold for the assembly of a functional preinitiation complex with RNA polymerase II and the general transcription factors. This is Mediator of RNA polymerase II transcription subunit 10 (NUT2) from Candida albicans (strain SC5314 / ATCC MYA-2876) (Yeast).